A 406-amino-acid chain; its full sequence is Peptidase T (406 aa).

His-77 provides a ligand contact to Zn(2+). Residue Asp-79 is part of the active site. Asp-139 is a Zn(2+) binding site. Glu-173 acts as the Proton acceptor in catalysis. Positions 174, 196, and 377 each coordinate Zn(2+).

This sequence belongs to the peptidase M20B family. The cofactor is Zn(2+).

It localises to the cytoplasm. The enzyme catalyses Release of the N-terminal residue from a tripeptide.. In terms of biological role, cleaves the N-terminal amino acid of tripeptides. This Parabacteroides distasonis (strain ATCC 8503 / DSM 20701 / CIP 104284 / JCM 5825 / NCTC 11152) protein is Peptidase T.